The chain runs to 357 residues: Peptide chain release factor 1 (357 aa).

N5-methylglutamine is present on Gln234. Residues Arg284–Glu304 are disordered.

Belongs to the prokaryotic/mitochondrial release factor family. Methylated by PrmC. Methylation increases the termination efficiency of RF1.

It localises to the cytoplasm. Functionally, peptide chain release factor 1 directs the termination of translation in response to the peptide chain termination codons UAG and UAA. The protein is Peptide chain release factor 1 of Pelagibacter ubique (strain HTCC1062).